Reading from the N-terminus, the 431-residue chain is Histidinol dehydrogenase (431 aa).

3 residues coordinate NAD(+): Y127, Q189, and N212. Substrate-binding residues include S237, Q259, and H262. The Zn(2+) site is built by Q259 and H262. Residues E326 and H327 each act as proton acceptor in the active site. Substrate contacts are provided by H327, D360, E414, and H419. D360 provides a ligand contact to Zn(2+). A Zn(2+)-binding site is contributed by H419.

Belongs to the histidinol dehydrogenase family. The cofactor is Zn(2+).

It carries out the reaction L-histidinol + 2 NAD(+) + H2O = L-histidine + 2 NADH + 3 H(+). It participates in amino-acid biosynthesis; L-histidine biosynthesis; L-histidine from 5-phospho-alpha-D-ribose 1-diphosphate: step 9/9. Catalyzes the sequential NAD-dependent oxidations of L-histidinol to L-histidinaldehyde and then to L-histidine. The protein is Histidinol dehydrogenase of Xanthomonas euvesicatoria pv. vesicatoria (strain 85-10) (Xanthomonas campestris pv. vesicatoria).